The chain runs to 145 residues: MEILIKNKRANFDYEIIDRFTAGIVLLGWEVKSIQAKNISLVGAFCYFKGHELFLSNAKISEYKGSRGQTDRSRKLLMHKHELKKILKEKITRKLAIIPLFIGQKNRKIKLEIALAKGKTKLDKRNLIKERDQKREAAKFLKNYY.

It belongs to the SmpB family.

The protein localises to the cytoplasm. Functionally, required for rescue of stalled ribosomes mediated by trans-translation. Binds to transfer-messenger RNA (tmRNA), required for stable association of tmRNA with ribosomes. tmRNA and SmpB together mimic tRNA shape, replacing the anticodon stem-loop with SmpB. tmRNA is encoded by the ssrA gene; the 2 termini fold to resemble tRNA(Ala) and it encodes a 'tag peptide', a short internal open reading frame. During trans-translation Ala-aminoacylated tmRNA acts like a tRNA, entering the A-site of stalled ribosomes, displacing the stalled mRNA. The ribosome then switches to translate the ORF on the tmRNA; the nascent peptide is terminated with the 'tag peptide' encoded by the tmRNA and targeted for degradation. The ribosome is freed to recommence translation, which seems to be the essential function of trans-translation. The chain is SsrA-binding protein from Mesomycoplasma hyopneumoniae (strain 232) (Mycoplasma hyopneumoniae).